The sequence spans 328 residues: Methionyl-tRNA formyltransferase (328 aa).

110 to 113 is a binding site for (6S)-5,6,7,8-tetrahydrofolate; that stretch reads SNLP.

The protein belongs to the Fmt family.

It catalyses the reaction L-methionyl-tRNA(fMet) + (6R)-10-formyltetrahydrofolate = N-formyl-L-methionyl-tRNA(fMet) + (6S)-5,6,7,8-tetrahydrofolate + H(+). Functionally, attaches a formyl group to the free amino group of methionyl-tRNA(fMet). The formyl group appears to play a dual role in the initiator identity of N-formylmethionyl-tRNA by promoting its recognition by IF2 and preventing the misappropriation of this tRNA by the elongation apparatus. This is Methionyl-tRNA formyltransferase from Bifidobacterium longum (strain DJO10A).